Here is a 258-residue protein sequence, read N- to C-terminus: Large ribosomal subunit protein bL19m (258 aa).

Residues 235–258 are disordered; sequence SKGLTGGVGGGGGKQKGQESKKKN. Over residues 238 to 249 the composition is skewed to gly residues; that stretch reads LTGGVGGGGGKQ.

Belongs to the bacterial ribosomal protein bL19 family. In terms of assembly, component of the mitochondrial large ribosomal subunit (mt-LSU). Mature N.crassa 74S mitochondrial ribosomes consist of a small (37S) and a large (54S) subunit. The 37S small subunit contains a 16S ribosomal RNA (16S mt-rRNA) and 32 different proteins. The 54S large subunit contains a 23S rRNA (23S mt-rRNA) and 42 different proteins.

Its subcellular location is the mitochondrion. Its function is as follows. Component of the mitochondrial ribosome (mitoribosome), a dedicated translation machinery responsible for the synthesis of mitochondrial genome-encoded proteins, including at least some of the essential transmembrane subunits of the mitochondrial respiratory chain. The mitoribosomes are attached to the mitochondrial inner membrane and translation products are cotranslationally integrated into the membrane. This Neurospora crassa (strain ATCC 24698 / 74-OR23-1A / CBS 708.71 / DSM 1257 / FGSC 987) protein is Large ribosomal subunit protein bL19m (img1).